A 524-amino-acid polypeptide reads, in one-letter code: Indoleacetamide hydrolase (524 aa).

Composition is skewed to basic residues over residues 1–26 and 34–54; these read MAKK…KATA and AAKK…RRPK. Residues 1–56 form a disordered region; that stretch reads MAKKTASKKKSVSRKVTKTSSKKATARKGAVAKAAKKSVKKAAPRKSATARRPKGP. Catalysis depends on charge relay system residues lysine 133 and serine 208. The active-site Acyl-ester intermediate is the serine 232.

The protein belongs to the amidase family.

It participates in plant hormone metabolism; auxin biosynthesis. Hydrolyzes indole-3-acetamide (IAM) into indole-3-acetic acid (IAA). This is Indoleacetamide hydrolase (bam) from Bradyrhizobium diazoefficiens (strain JCM 10833 / BCRC 13528 / IAM 13628 / NBRC 14792 / USDA 110).